Reading from the N-terminus, the 306-residue chain is tRNA dimethylallyltransferase (306 aa).

12–19 (GPTGVGKS) lines the ATP pocket. 14–19 (TGVGKS) contributes to the substrate binding site.

The protein belongs to the IPP transferase family. Monomer. Mg(2+) serves as cofactor.

The enzyme catalyses adenosine(37) in tRNA + dimethylallyl diphosphate = N(6)-dimethylallyladenosine(37) in tRNA + diphosphate. In terms of biological role, catalyzes the transfer of a dimethylallyl group onto the adenine at position 37 in tRNAs that read codons beginning with uridine, leading to the formation of N6-(dimethylallyl)adenosine (i(6)A). This chain is tRNA dimethylallyltransferase, found in Desulfatibacillum aliphaticivorans.